The chain runs to 330 residues: Aspartate--ammonia ligase (330 aa).

The protein belongs to the class-II aminoacyl-tRNA synthetase family. AsnA subfamily.

The protein resides in the cytoplasm. It carries out the reaction L-aspartate + NH4(+) + ATP = L-asparagine + AMP + diphosphate + H(+). It functions in the pathway amino-acid biosynthesis; L-asparagine biosynthesis; L-asparagine from L-aspartate (ammonia route): step 1/1. The chain is Aspartate--ammonia ligase from Escherichia coli O81 (strain ED1a).